A 121-amino-acid polypeptide reads, in one-letter code: Ribonuclease P protein component (121 aa).

It belongs to the RnpA family. In terms of assembly, consists of a catalytic RNA component (M1 or rnpB) and a protein subunit.

The enzyme catalyses Endonucleolytic cleavage of RNA, removing 5'-extranucleotides from tRNA precursor.. Functionally, RNaseP catalyzes the removal of the 5'-leader sequence from pre-tRNA to produce the mature 5'-terminus. It can also cleave other RNA substrates such as 4.5S RNA. The protein component plays an auxiliary but essential role in vivo by binding to the 5'-leader sequence and broadening the substrate specificity of the ribozyme. The protein is Ribonuclease P protein component of Bifidobacterium adolescentis (strain ATCC 15703 / DSM 20083 / NCTC 11814 / E194a).